We begin with the raw amino-acid sequence, 460 residues long: Bifunctional protein GlmU (460 aa).

The segment at 1 to 232 is pyrophosphorylase; that stretch reads MALNVVILAA…AIEVEGANNR (232 aa). UDP-N-acetyl-alpha-D-glucosamine contacts are provided by residues 8-11, K22, Q73, 78-79, 100-102, G137, E157, N172, and N230; these read LAAG, GT, and YGD. D102 is a Mg(2+) binding site. Residue N230 participates in Mg(2+) binding. The tract at residues 233–253 is linker; that stretch reads VQLAQLERAYQAREAEKLMLA. Residues 254-460 are N-acetyltransferase; that stretch reads GANLRDPSRI…GWQRPVKIKK (207 aa). The UDP-N-acetyl-alpha-D-glucosamine site is built by R336 and K354. The Proton acceptor role is filled by H366. Residues Y369 and N380 each contribute to the UDP-N-acetyl-alpha-D-glucosamine site. Acetyl-CoA-binding positions include A383, 389–390, S408, A426, and R443; that span reads NY.

The protein in the N-terminal section; belongs to the N-acetylglucosamine-1-phosphate uridyltransferase family. This sequence in the C-terminal section; belongs to the transferase hexapeptide repeat family. As to quaternary structure, homotrimer. Mg(2+) serves as cofactor.

The protein resides in the cytoplasm. It catalyses the reaction alpha-D-glucosamine 1-phosphate + acetyl-CoA = N-acetyl-alpha-D-glucosamine 1-phosphate + CoA + H(+). The enzyme catalyses N-acetyl-alpha-D-glucosamine 1-phosphate + UTP + H(+) = UDP-N-acetyl-alpha-D-glucosamine + diphosphate. It participates in nucleotide-sugar biosynthesis; UDP-N-acetyl-alpha-D-glucosamine biosynthesis; N-acetyl-alpha-D-glucosamine 1-phosphate from alpha-D-glucosamine 6-phosphate (route II): step 2/2. The protein operates within nucleotide-sugar biosynthesis; UDP-N-acetyl-alpha-D-glucosamine biosynthesis; UDP-N-acetyl-alpha-D-glucosamine from N-acetyl-alpha-D-glucosamine 1-phosphate: step 1/1. Its pathway is bacterial outer membrane biogenesis; LPS lipid A biosynthesis. Its function is as follows. Catalyzes the last two sequential reactions in the de novo biosynthetic pathway for UDP-N-acetylglucosamine (UDP-GlcNAc). The C-terminal domain catalyzes the transfer of acetyl group from acetyl coenzyme A to glucosamine-1-phosphate (GlcN-1-P) to produce N-acetylglucosamine-1-phosphate (GlcNAc-1-P), which is converted into UDP-GlcNAc by the transfer of uridine 5-monophosphate (from uridine 5-triphosphate), a reaction catalyzed by the N-terminal domain. The sequence is that of Bifunctional protein GlmU from Shewanella baltica (strain OS155 / ATCC BAA-1091).